Here is a 203-residue protein sequence, read N- to C-terminus: Holliday junction branch migration complex subunit RuvA (203 aa).

Residues 1-64 are domain I; it reads MIGRLNGILV…EDAQLLYGFI (64 aa). The domain II stretch occupies residues 65–143; that stretch reads TKQERALFRL…SLLEASVGNE (79 aa). Residues 144 to 154 are flexible linker; sequence REFMLQTNYTA. The domain III stretch occupies residues 155–203; it reads PAANAEEDAISALVSLGYKPPQASRAVSKAYKEGMDTETLIKLALKSML.

It belongs to the RuvA family. In terms of assembly, homotetramer. Forms an RuvA(8)-RuvB(12)-Holliday junction (HJ) complex. HJ DNA is sandwiched between 2 RuvA tetramers; dsDNA enters through RuvA and exits via RuvB. An RuvB hexamer assembles on each DNA strand where it exits the tetramer. Each RuvB hexamer is contacted by two RuvA subunits (via domain III) on 2 adjacent RuvB subunits; this complex drives branch migration. In the full resolvosome a probable DNA-RuvA(4)-RuvB(12)-RuvC(2) complex forms which resolves the HJ.

Its subcellular location is the cytoplasm. Functionally, the RuvA-RuvB-RuvC complex processes Holliday junction (HJ) DNA during genetic recombination and DNA repair, while the RuvA-RuvB complex plays an important role in the rescue of blocked DNA replication forks via replication fork reversal (RFR). RuvA specifically binds to HJ cruciform DNA, conferring on it an open structure. The RuvB hexamer acts as an ATP-dependent pump, pulling dsDNA into and through the RuvAB complex. HJ branch migration allows RuvC to scan DNA until it finds its consensus sequence, where it cleaves and resolves the cruciform DNA. The polypeptide is Holliday junction branch migration complex subunit RuvA (Shewanella denitrificans (strain OS217 / ATCC BAA-1090 / DSM 15013)).